A 702-amino-acid chain; its full sequence is Vertnin (702 aa).

The disordered stretch occupies residues 562 to 625; it reads VPTLGKGGQE…QGQPHSGPLL (64 aa). Positions 570–582 are enriched in basic and acidic residues; sequence QEAEEKQEKEAGR.

It belongs to the vertnin family.

It is found in the nucleus. Acts as a transcription factor that regulates development of thoracic vertebrae. This chain is Vertnin, found in Homo sapiens (Human).